The following is a 1078-amino-acid chain: Zinc finger protein 827 (1078 aa).

The segment covering 1-10 (MPRRKQEQPK) has biased composition (basic and acidic residues). Residues 1–14 (MPRRKQEQPKRLPS) are mediates direct interaction with RBBP4. The tract at residues 1–76 (MPRRKQEQPK…PDTSLGSATP (76 aa)) is disordered. Residues 3 to 5 (RRK) carry the RRK motif; mediates NuRD recruitment to telomeres motif. 2 stretches are compositionally biased toward polar residues: residues 33-42 (YGNSSETPSE) and 62-76 (EQST…SATP). Residues K175, K215, and K225 each participate in a glycyl lysine isopeptide (Lys-Gly) (interchain with G-Cter in SUMO2) cross-link. Positions 307–341 (SLLPDDPLPLPSSEKKPEKVTPPPPPPPPTAQPPQ) are disordered. The segment covering 326 to 338 (VTPPPPPPPPTAQ) has biased composition (pro residues). Residues K357 and K369 each participate in a glycyl lysine isopeptide (Lys-Gly) (interchain with G-Cter in SUMO2) cross-link. 3 C2H2-type zinc fingers span residues 371–393 (FQCP…MVIH), 399–421 (HQCP…MKVH), and 430–452 (FQCQ…MRCH). Glycyl lysine isopeptide (Lys-Gly) (interchain with G-Cter in SUMO2) cross-links involve residues K463, K472, K520, K546, K577, K584, and K594. The interval 466 to 490 (IPDPDVKGSPHLSDSGCLGQQREGG) is disordered. Residues 594 to 640 (KEEPKEEESLSMPLPRSSYVFSPEPEVSTPSVSEDPLTPQEGKGSVL) form a disordered region. Residues 613 to 627 (VFSPEPEVSTPSVSE) show a composition bias toward low complexity. Glycyl lysine isopeptide (Lys-Gly) (interchain with G-Cter in SUMO2) cross-links involve residues K636 and K655. A Glycyl lysine isopeptide (Lys-Gly) (interchain with G-Cter in SUMO1); alternate cross-link involves residue K670. A Glycyl lysine isopeptide (Lys-Gly) (interchain with G-Cter in SUMO2); alternate cross-link involves residue K670. Residues K701, K707, K739, K775, and K795 each participate in a glycyl lysine isopeptide (Lys-Gly) (interchain with G-Cter in SUMO2) cross-link. 2 consecutive C2H2-type zinc fingers follow at residues 814–836 (FPCD…LSLH) and 842–864 (YKCH…LTVH). Residues K867 and K888 each participate in a glycyl lysine isopeptide (Lys-Gly) (interchain with G-Cter in SUMO2) cross-link. 2 consecutive C2H2-type zinc fingers follow at residues 894–916 (YSCH…MSLH) and 926–949 (ICCT…GTKH). Over residues 945 to 957 (IGTKHTGDDRKTP) the composition is skewed to basic and acidic residues. The disordered stretch occupies residues 945–990 (IGTKHTGDDRKTPSESNSPSSSSLSTLSDSANGKDDSDSSQKNKGG). A Glycyl lysine isopeptide (Lys-Gly) (interchain with G-Cter in SUMO2) cross-link involves residue K955. A compositionally biased stretch (low complexity) spans 958 to 974 (SESNSPSSSSLSTLSDS). A compositionally biased stretch (basic and acidic residues) spans 976–985 (NGKDDSDSSQ). K1011 participates in a covalent cross-link: Glycyl lysine isopeptide (Lys-Gly) (interchain with G-Cter in SUMO2). 2 consecutive C2H2-type zinc fingers follow at residues 1016 to 1038 (FECV…LQIH) and 1044 to 1066 (FECD…KKCH).

It belongs to the krueppel C2H2-type zinc-finger protein family. Part of a transcription inhibitory ribonucleoprotein complex composed at least of the circular RNA circZNF827, HNRNPK and HNRNPL. Interacts with the nucleosome remodeling and histone deacetylase/NuRD complex. Interacts with RBBP4; the interaction is direct and recruits RBBP4, a component of the NuRD complex, to telomeres.

Its subcellular location is the nucleus. The protein resides in the chromosome. The protein localises to the telomere. Its function is as follows. As part of a ribonucleoprotein complex composed at least of HNRNPK, HNRNPL and the circular RNA circZNF827 that nucleates the complex on chromatin, may negatively regulate the transcription of genes involved in neuronal differentiation. Could also recruit the nucleosome remodeling and histone deacetylase/NuRD complex to telomeric regions of chromosomes to regulate chromatin remodeling as part of telomere maintenance. This chain is Zinc finger protein 827 (Znf827), found in Mus musculus (Mouse).